Consider the following 333-residue polypeptide: HTH-type transcriptional regulator pepR1 (333 aa).

One can recognise an HTH lacI-type domain in the interval 6-60; sequence VTIYDVAREAKVSMATVSRVVNGNNNVRKETRDRVMEVIKRLHYQPNAVAQGLAS. Positions 8-27 form a DNA-binding region, H-T-H motif; sequence IYDVAREAKVSMATVSRVVN.

Its function is as follows. Transcriptional regulator of the pepQ gene for prolidase. This chain is HTH-type transcriptional regulator pepR1 (pepR1), found in Lactobacillus delbrueckii subsp. lactis.